The chain runs to 254 residues: Hydroxyacylglutathione hydrolase (254 aa).

Positions 54, 56, 58, 59, 111, 130, and 168 each coordinate Zn(2+).

Belongs to the metallo-beta-lactamase superfamily. Glyoxalase II family. Monomer. The cofactor is Zn(2+).

It carries out the reaction an S-(2-hydroxyacyl)glutathione + H2O = a 2-hydroxy carboxylate + glutathione + H(+). It participates in secondary metabolite metabolism; methylglyoxal degradation; (R)-lactate from methylglyoxal: step 2/2. Its function is as follows. Thiolesterase that catalyzes the hydrolysis of S-D-lactoyl-glutathione to form glutathione and D-lactic acid. This chain is Hydroxyacylglutathione hydrolase, found in Legionella pneumophila (strain Corby).